A 435-amino-acid chain; its full sequence is Hydrogenobyrinate a,c-diamide synthase (435 aa).

The 189-residue stretch at 247 to 435 (RIALARDAAF…TGSFFHLIAG (189 aa)) folds into the GATase cobBQ-type domain. The active-site Nucleophile is the Cys-329.

This sequence belongs to the CobB/CbiA family. It depends on Mg(2+) as a cofactor.

It catalyses the reaction hydrogenobyrinate + 2 L-glutamine + 2 ATP + 2 H2O = hydrogenobyrinate a,c-diamide + 2 L-glutamate + 2 ADP + 2 phosphate + 2 H(+). It functions in the pathway cofactor biosynthesis; adenosylcobalamin biosynthesis; cob(II)yrinate a,c-diamide from precorrin-2 (aerobic route): step 9/10. In terms of biological role, catalyzes the ATP-dependent amidation of the two carboxylate groups at positions a and c of hydrogenobyrinate, using either L-glutamine or ammonia as the nitrogen source. This Rhodobacter capsulatus (strain ATCC BAA-309 / NBRC 16581 / SB1003) protein is Hydrogenobyrinate a,c-diamide synthase.